The primary structure comprises 60 residues: Disagregin (60 aa).

Positions 14 to 16 match the Cell attachment site; atypical motif; the sequence is RED.

As to expression, expressed in salivary glands.

The protein localises to the secreted. In terms of biological role, tick salivary platelet aggregation inhibitor that plays an important part in the anti-hemostatic strategy of ticks. Inhibits fibrinogen interaction with platelets. Acts by binding (in a divalent metal ion dependent manner) to the glycoprotein IIb-IIIa receptor (ITGA2B/ITGB3) on the platelet surface and inhibits aggregation induced by ADP (IC(50)=99-104 nM), thrombin, collagen (IC(50)=64 nM) platelet-activating factor and collagen. Interacts to unstimulated platelets (Kd=42.5 nM) and to ADP-stimulated platelets (Kd=39.4 nM). In contrast to many disintegrins which only interact with the beta-3 subunit, interacts with the two subunits (alpha-IIb and beta-3). Under flow conditions, reduces and delays platelet adhesion, aggregation, and fibrin formation. This Ornithodoros moubata (Soft tick) protein is Disagregin.